The primary structure comprises 361 residues: Protein SGT1 homolog (361 aa).

TPR repeat units lie at residues A3–T36, A37–M70, and H71–D104. T150 bears the Phosphothreonine mark. A CS domain is found at K159–D248. The disordered stretch occupies residues A255–E295. T262 bears the Phosphothreonine mark. Residues S271–I361 form the SGS domain. Residues S277–E295 are compositionally biased toward basic and acidic residues.

This sequence belongs to the SGT1 family. In terms of processing, constitutively phosphorylated at Thr-262 and phosphorylated at Thr-150 upon infection with the fungal pathogen Ustilago maydis.

It is found in the cytoplasm. Its subcellular location is the nucleus. Its function is as follows. May act as positive regulator of basal defense. May be involved in basal disease resistance to the fungal pathogen Ustilago maydis. This is Protein SGT1 homolog from Zea mays (Maize).